The chain runs to 327 residues: DNA-directed RNA polymerase subunit alpha (327 aa).

The alpha N-terminal domain (alpha-NTD) stretch occupies residues 1–233 (MVREKVKVST…NLFIPFLHVE (233 aa)). The interval 267–327 (LAFQYIFIDQ…KKILDILEKK (61 aa)) is alpha C-terminal domain (alpha-CTD).

The protein belongs to the RNA polymerase alpha chain family. As to quaternary structure, in plastids the minimal PEP RNA polymerase catalytic core is composed of four subunits: alpha, beta, beta', and beta''. When a (nuclear-encoded) sigma factor is associated with the core the holoenzyme is formed, which can initiate transcription.

It localises to the plastid. Its subcellular location is the chloroplast. It catalyses the reaction RNA(n) + a ribonucleoside 5'-triphosphate = RNA(n+1) + diphosphate. Functionally, DNA-dependent RNA polymerase catalyzes the transcription of DNA into RNA using the four ribonucleoside triphosphates as substrates. In Lobularia maritima (Sweet alyssum), this protein is DNA-directed RNA polymerase subunit alpha.